The sequence spans 510 residues: ATP synthase subunit alpha (510 aa).

G171–T178 serves as a coordination point for ATP.

The protein belongs to the ATPase alpha/beta chains family. As to quaternary structure, F-type ATPases have 2 components, CF(1) - the catalytic core - and CF(0) - the membrane proton channel. CF(1) has five subunits: alpha(3), beta(3), gamma(1), delta(1), epsilon(1). CF(0) has three main subunits: a(1), b(2) and c(9-12). The alpha and beta chains form an alternating ring which encloses part of the gamma chain. CF(1) is attached to CF(0) by a central stalk formed by the gamma and epsilon chains, while a peripheral stalk is formed by the delta and b chains.

It localises to the cell inner membrane. It catalyses the reaction ATP + H2O + 4 H(+)(in) = ADP + phosphate + 5 H(+)(out). Functionally, produces ATP from ADP in the presence of a proton gradient across the membrane. The alpha chain is a regulatory subunit. This Phenylobacterium zucineum (strain HLK1) protein is ATP synthase subunit alpha.